Consider the following 67-residue polypeptide: Conotoxin Im3.1 (67 aa).

The N-terminal stretch at 1–20 (MMSTLVVLLTICLLMLPLTA) is a signal peptide. Residues 21–52 (RQLDADQLADQLAERMEDISADQNRWFDPVKR) constitute a propeptide that is removed on maturation. 3 cysteine pairs are disulfide-bonded: cysteine 53-cysteine 63, cysteine 54-cysteine 61, and cysteine 59-cysteine 64.

The protein belongs to the conotoxin M superfamily. In terms of tissue distribution, expressed by the venom duct.

The protein localises to the secreted. Its function is as follows. Probable neurotoxin. This chain is Conotoxin Im3.1, found in Conus imperialis (Imperial cone).